Consider the following 392-residue polypeptide: Cell division protein DivIB (392 aa).

Residues methionine 1–asparagine 88 form a disordered region. Topologically, residues methionine 1–methionine 131 are cytoplasmic. The segment covering lysine 14–alanine 32 has biased composition (basic and acidic residues). Residues threonine 58–asparagine 76 are compositionally biased toward acidic residues. Residues tryptophan 132–leucine 152 form a helical membrane-spanning segment. The 72-residue stretch at serine 153–histidine 224 folds into the POTRA domain. Residues serine 153–asparagine 392 lie on the Extracellular side of the membrane. A disordered region spans residues isoleucine 368–asparagine 392.

It belongs to the FtsQ/DivIB family. DivIB subfamily.

Its subcellular location is the cell membrane. Cell division protein that may be involved in stabilizing or promoting the assembly of the division complex. This is Cell division protein DivIB from Lactococcus lactis subsp. lactis (strain KF147).